A 341-amino-acid polypeptide reads, in one-letter code: Serpentine receptor class beta-3 (341 aa).

Residues 1-23 (MLETNDSVCELAYQLAYHPVYRS) are Extracellular-facing. Asparagine 5 carries an N-linked (GlcNAc...) asparagine glycan. A helical membrane pass occupies residues 24–44 (SQFWSMLVSSLSIPALIYFIT). The Cytoplasmic segment spans residues 45–58 (RKIFFLHFHGNLKC). Residues 59-79 (LLIVYFICNLLFSMALCFAFF) traverse the membrane as a helical segment. Over 80–103 (YQFLIPFFVTSKCQLLINTTLFKW) the chain is Extracellular. A glycan (N-linked (GlcNAc...) asparagine) is linked at asparagine 97. The chain crosses the membrane as a helical span at residues 104–124 (GQICSFLLLTSSMLLPIGFSI). Residues 125–141 (ERFVALGNAQKYESSRT) are Cytoplasmic-facing. The chain crosses the membrane as a helical span at residues 142–162 (FLGPVIIFIIIAVDFSIIFSV). Topologically, residues 163–187 (YKNEPFTEGFYSFILVPSTTASQIN) are extracellular. A helical transmembrane segment spans residues 188-208 (MYFFVLLFVKIFNLLLNCILL). Over 209 to 237 (RIHKKIRIKYYSLSVRYEMEEILQSSKFT) the chain is Cytoplasmic. A helical transmembrane segment spans residues 238–258 (FIIRFTHLLFFGFYVVVILFV). Topologically, residues 259–276 (RIMGESFFNGTLNYSVAR) are extracellular. N-linked (GlcNAc...) asparagine glycosylation is found at asparagine 267 and asparagine 271. A helical transmembrane segment spans residues 277–297 (GVFCTVPTYNLIIVIIGIKSL). Residues 298 to 341 (RHLNLQRLNKVQSTVQIKSTGKEGSKNYEDIITNYWDSVSSRTP) lie on the Cytoplasmic side of the membrane.

Belongs to the nematode receptor-like protein srb family. In terms of tissue distribution, expressed throughout the head.

The protein resides in the cell membrane. Its subcellular location is the perikaryon. It is found in the cell projection. It localises to the dendrite. G-protein coupled receptor. This is Serpentine receptor class beta-3 from Caenorhabditis elegans.